Consider the following 120-residue polypeptide: UPF0102 protein HSM_1206 (120 aa).

Belongs to the UPF0102 family.

In Histophilus somni (strain 2336) (Haemophilus somnus), this protein is UPF0102 protein HSM_1206.